The following is a 326-amino-acid chain: Probable pectate lyase B (326 aa).

Positions Met1–Ala15 are cleaved as a signal peptide. 3 residues coordinate Ca(2+): Asp133, Asp162, and Asp166. Residue Arg219 is part of the active site.

The protein belongs to the polysaccharide lyase 1 family. Ca(2+) is required as a cofactor.

Its subcellular location is the secreted. It carries out the reaction Eliminative cleavage of (1-&gt;4)-alpha-D-galacturonan to give oligosaccharides with 4-deoxy-alpha-D-galact-4-enuronosyl groups at their non-reducing ends.. Functionally, pectinolytic enzyme consist of four classes of enzymes: pectin lyase, polygalacturonase, pectin methylesterase and rhamnogalacturonase. Among pectinolytic enzymes, pectin lyase is the most important in depolymerization of pectin, since it cleaves internal glycosidic bonds of highly methylated pectins. Favors pectate, the anion, over pectin, the methyl ester. This is Probable pectate lyase B (plyB) from Aspergillus flavus (strain ATCC 200026 / FGSC A1120 / IAM 13836 / NRRL 3357 / JCM 12722 / SRRC 167).